The chain runs to 141 residues: Large ribosomal subunit protein uL11 (141 aa).

This sequence belongs to the universal ribosomal protein uL11 family. In terms of assembly, part of the ribosomal stalk of the 50S ribosomal subunit. Interacts with L10 and the large rRNA to form the base of the stalk. L10 forms an elongated spine to which L12 dimers bind in a sequential fashion forming a multimeric L10(L12)X complex. Post-translationally, one or more lysine residues are methylated.

In terms of biological role, forms part of the ribosomal stalk which helps the ribosome interact with GTP-bound translation factors. The chain is Large ribosomal subunit protein uL11 from Lactobacillus delbrueckii subsp. bulgaricus (strain ATCC 11842 / DSM 20081 / BCRC 10696 / JCM 1002 / NBRC 13953 / NCIMB 11778 / NCTC 12712 / WDCM 00102 / Lb 14).